A 418-amino-acid chain; its full sequence is Sialidase-3 (418 aa).

The short motif at 24-27 (YRIP) is the FRIP motif element. Positions 25 and 45 each coordinate substrate. The active-site Proton acceptor is Asp-50. The BNR 1 repeat unit spans residues 129-140 (LYSEDSGCSWGE). Substrate contacts are provided by Tyr-179 and Tyr-181. One copy of the BNR 2 repeat lies at 201–212 (FYSDDLGVTWHC). Glu-223 and Arg-243 together coordinate substrate. The BNR 3 repeat unit spans residues 252–263 (AFSTDSGDCFQK). Residue Arg-339 participates in substrate binding. Tyr-369 acts as the Nucleophile in catalysis. Glu-386 is an active-site residue.

This sequence belongs to the glycosyl hydrolase 33 family. As to quaternary structure, interacts with CAV1; this interaction enhances NEU3 sialidase activity within caveola. Interacts with EGFR; this interaction mediates desialylation of EGFR enhancing downstream signaling. In terms of processing, palmitoylated; may regulate intracellular trafficking and anchorage to plasma membrane and endomembranes. As to expression, expressed in brain, cardiac muscle and weakly in liver.

It is found in the cell membrane. Its subcellular location is the membrane. It localises to the caveola. The protein localises to the early endosome membrane. The protein resides in the recycling endosome membrane. It is found in the lysosome membrane. It carries out the reaction Hydrolysis of alpha-(2-&gt;3)-, alpha-(2-&gt;6)-, alpha-(2-&gt;8)- glycosidic linkages of terminal sialic acid residues in oligosaccharides, glycoproteins, glycolipids, colominic acid and synthetic substrates.. The enzyme catalyses a ganglioside GD1a + H2O = a ganglioside GM1 + N-acetylneuraminate. The catalysed reaction is a ganglioside GD1a (d18:1(4E)) + H2O = a ganglioside GM1 (d18:1(4E)) + N-acetylneuraminate. It catalyses the reaction a ganglioside GD1b + H2O = a ganglioside GM1 + N-acetylneuraminate. It carries out the reaction a ganglioside GD1b (d18:1(4E)) + H2O = a ganglioside GM1 (d18:1(4E)) + N-acetylneuraminate. The enzyme catalyses a ganglioside GD3 + H2O = a ganglioside GM3 + N-acetylneuraminate. The catalysed reaction is a ganglioside GD3 (d18:1(4E)) + H2O = a ganglioside GM3 (d18:1(4E)) + N-acetylneuraminate. It catalyses the reaction a ganglioside GM3 + H2O = a beta-D-galactosyl-(1-&gt;4)-beta-D-glucosyl-(1&lt;-&gt;1)-ceramide + N-acetylneuraminate. It carries out the reaction a ganglioside GM1 + H2O = a ganglioside GA1 + N-acetylneuraminate. The enzyme catalyses a ganglioside GM1 (d18:1(4E)) + H2O = a ganglioside GA1 (d18:1(4E)) + N-acetylneuraminate. The catalysed reaction is a ganglioside GM2 (d18:1(4E)) + H2O = a ganglioside GA2 (d18:1(4E)) + N-acetylneuraminate. It catalyses the reaction a ganglioside GM3 (d18:1(4E)) + H2O = a beta-D-Gal-(1-&gt;4)-beta-D-Glc-(1&lt;-&gt;1)-Cer(d18:1(4E)) + N-acetylneuraminate. It carries out the reaction a ganglioside GT1b + H2O = a ganglioside GD1b + N-acetylneuraminate. Its function is as follows. Exo-alpha-sialidase that catalyzes the hydrolytic cleavage of the terminal sialic acid (N-acetylneuraminic acid, Neu5Ac) of a glycan moiety in the catabolism of glycolipids, glycoproteins and oligosacharides. Displays high catalytic efficiency for gangliosides including alpha-(2-&gt;3)-sialylated GD1a and GM3 and alpha-(2-&gt;8)-sialylated GD3. Plays a role in the regulation of transmembrane signaling through the modulation of ganglioside content of the lipid bilayer and by direct interaction with signaling receptors, such as EGFR. Desialylates EGFR and activates downstream signaling in proliferating cells. Contributes to clathrin-mediated endocytosis by regulating sorting of endocytosed receptors to early and recycling endosomes. The polypeptide is Sialidase-3 (Neu3) (Rattus norvegicus (Rat)).